Consider the following 132-residue polypeptide: Long-chain acyl-CoA thioesterase FadM (132 aa).

Asp13 is an active-site residue.

Belongs to the 4-hydroxybenzoyl-CoA thioesterase family. As to quaternary structure, homotetramer.

It catalyses the reaction (3E,5Z)-tetradecadienoyl-CoA + H2O = (3E,5Z)-tetradecadienoate + CoA + H(+). It carries out the reaction (3E,5Z)-dodecadienoyl-CoA + H2O = (3E,5Z)-dodecadienoate + CoA + H(+). The catalysed reaction is (9Z)-octadecenoyl-CoA + H2O = (9Z)-octadecenoate + CoA + H(+). The enzyme catalyses octadecanoyl-CoA + H2O = octadecanoate + CoA + H(+). It catalyses the reaction hexadecanoyl-CoA + H2O = hexadecanoate + CoA + H(+). It carries out the reaction (3S)-hydroxytetradecanoyl-CoA + H2O = (3S)-hydroxytetradecanoate + CoA + H(+). The catalysed reaction is tetradecanoyl-CoA + H2O = tetradecanoate + CoA + H(+). Long-chain acyl-CoA thioesterase that could be involved in beta-oxidation of fatty acids. Is most active with 3,5-tetradecadienoyl-CoA, a metabolite of oleic acid that is hydrolyzed during oleate beta-oxidation, but can also use other substrates such as 3,5-dodecadienoyl-CoA, 9-cis-octadecenoyl-CoA, octadecanoyl-CoA, hexadecanoyl-CoA, 3-hydroxytetradecanoyl-CoA and tetradecanoyl-CoA. The chain is Long-chain acyl-CoA thioesterase FadM from Escherichia coli (strain K12).